The primary structure comprises 763 residues: G protein-regulated inducer of neurite outgrowth 3 (763 aa).

Disordered stretches follow at residues 1–48 (MGTV…IGNV), 65–111 (QACV…APGL), and 192–268 (ENSQ…GATC). A compositionally biased stretch (polar residues) spans 27-44 (ESQSVSPQPAQPDNNASG). Residues 93 to 104 (KTPDDFLLHGSK) are compositionally biased toward basic and acidic residues. Residues 237–250 (ENKQPSATALNTTA) are compositionally biased toward polar residues. A phosphoserine mark is found at Ser-323 and Ser-359. Disordered stretches follow at residues 420-452 (TSSQNTETEEDLRLSASKEATSRQPEGTNPDFQ), 471-624 (NQGL…PRRG), and 711-737 (VKTQSGQTRRSISSDSSSSKKLKGRQH). A compositionally biased stretch (polar residues) spans 437 to 450 (KEATSRQPEGTNPD). Composition is skewed to basic and acidic residues over residues 480–496 (REPEIVVKTAKDHKAES) and 518–539 (PTDKKGAKDKKPASPLIVKDHA). A compositionally biased stretch (low complexity) spans 593–609 (SLSLPSDGTGDSSPGSG).

Its function is as follows. May be involved in neurite outgrowth. The protein is G protein-regulated inducer of neurite outgrowth 3 (Gprin3) of Mus musculus (Mouse).